The following is a 139-amino-acid chain: Probable transcription termination protein NusA (139 aa).

In terms of domain architecture, KH spans 97–139; the sequence is STVAYAEVDRADTGVAIGRDGETIETARRLAERQFDIDDIELA.

It belongs to the NusA family.

The protein localises to the cytoplasm. Its function is as follows. Participates in transcription termination. The chain is Probable transcription termination protein NusA from Halococcus morrhuae (Micrococcus morrhuae).